Here is an 83-residue protein sequence, read N- to C-terminus: Cytochrome b559 subunit alpha (83 aa).

The helical transmembrane segment at 21-35 (VIHSITIPSLFIAGW) threads the bilayer. Residue His-23 coordinates heme.

The protein belongs to the PsbE/PsbF family. Heterodimer of an alpha subunit and a beta subunit. PSII is composed of 1 copy each of membrane proteins PsbA, PsbB, PsbC, PsbD, PsbE, PsbF, PsbH, PsbI, PsbJ, PsbK, PsbL, PsbM, PsbT, PsbX, PsbY, PsbZ, Psb30/Ycf12, at least 3 peripheral proteins of the oxygen-evolving complex and a large number of cofactors. It forms dimeric complexes. The cofactor is heme b.

It is found in the plastid. The protein localises to the chloroplast thylakoid membrane. This b-type cytochrome is tightly associated with the reaction center of photosystem II (PSII). PSII is a light-driven water:plastoquinone oxidoreductase that uses light energy to abstract electrons from H(2)O, generating O(2) and a proton gradient subsequently used for ATP formation. It consists of a core antenna complex that captures photons, and an electron transfer chain that converts photonic excitation into a charge separation. The protein is Cytochrome b559 subunit alpha of Chara vulgaris (Common stonewort).